We begin with the raw amino-acid sequence, 186 residues long: Adenine phosphoribosyltransferase (186 aa).

Belongs to the purine/pyrimidine phosphoribosyltransferase family. Homodimer.

The protein localises to the cytoplasm. The catalysed reaction is AMP + diphosphate = 5-phospho-alpha-D-ribose 1-diphosphate + adenine. It participates in purine metabolism; AMP biosynthesis via salvage pathway; AMP from adenine: step 1/1. Catalyzes a salvage reaction resulting in the formation of AMP, that is energically less costly than de novo synthesis. This is Adenine phosphoribosyltransferase from Xanthomonas campestris pv. campestris (strain B100).